Here is a 373-residue protein sequence, read N- to C-terminus: RNA 3'-terminal phosphate cyclase-like protein (373 aa).

This sequence belongs to the RNA 3'-terminal cyclase family. Type 2 subfamily. As to quaternary structure, part of the small subunit (SSU) processome, composed of more than 70 proteins and the RNA chaperone small nucleolar RNA (snoRNA) U3. Interacts with BMS1.

Its subcellular location is the nucleus. It localises to the nucleolus. In terms of biological role, as part of the small subunit (SSU) processome, it plays a role in 40S-ribosomal-subunit biogenesis in the early pre-rRNA processing steps at sites A0, A1 and A2 that are required for proper maturation of the 18S RNA. Activates BMS1 by promoting GDP/GTP exchange. Does not have cyclase activity. This Homo sapiens (Human) protein is RNA 3'-terminal phosphate cyclase-like protein.